Here is a 617-residue protein sequence, read N- to C-terminus: Hemagglutinin glycoprotein (617 aa).

The Intravirion segment spans residues 1–37; it reads MSPQRDRINAFYKDNPHPKGSRIVINREHLMIDRPYV. Positions 1–154 are stalk; sequence MSPQRDRINA…RIKLDYDQYC (154 aa). Residues 38–58 form a helical; Signal-anchor for type II membrane protein membrane-spanning segment; that stretch reads LLAVLFVMFLSLIGLLAIAGI. Over 59–617 the chain is Virion surface; it reads RLHRAAIYTA…VTREDGTNRR (559 aa). Asn-168, Asn-187, Asn-200, Asn-215, and Asn-238 each carry an N-linked (GlcNAc...) asparagine; by host glycan. Intrachain disulfides connect Cys-188–Cys-606, Cys-287–Cys-300, Cys-381–Cys-494, Cys-386–Cys-394, and Cys-570–Cys-579. Residues 458–543 form an interaction with host NECTIN4 receptor region; the sequence is PMKNLALGVI…VEHAVVYYVY (86 aa).

This sequence belongs to the paramyxoviruses hemagglutinin-neuraminidase family. Non-sialidase subfamily. Homodimer; disulfide-linked. Further forms homotetramer (dimer of dimers). Interacts (via C-terminus) with human NECTIN4 (via N-terminus); this interaction allows attachment to the respiratory epithelium and viral entry. Interacts (via C-terminus) with human SLAMF1/CD150 (via N-terminus); this interaction allows attachment and viral entry into the CD150-expressing immune cells. Interacts with human CD46 antigen.

Its subcellular location is the virion membrane. It localises to the host cell membrane. In terms of biological role, attaches the virus to the human SLAMF1/CD150 receptor for entry into host dendritic cells, macrophages, activated memory T cells and naive or memory B cells, thereby explaining the long immunosuppression that follows infection. In the respiratory airways, binds to the NECTIN4 receptor for entry into the host cell. Binding of H protein to the receptor induces a conformational change that allows the F protein to trigger virion/cell membranes fusion. The vaccine and laboratory-adapted strains use host CD46 as an alternate receptor. The high degree of interaction between H and CD46 results in down-regulation of the latter from the surface of infected cells, rendering them more sensitive to c3b-mediated complement lysis. In Homo sapiens (Human), this protein is Hemagglutinin glycoprotein (H).